We begin with the raw amino-acid sequence, 81 residues long: UPF0180 protein BLi01634/BL05144 (81 aa).

It belongs to the UPF0180 family.

This is UPF0180 protein BLi01634/BL05144 from Bacillus licheniformis (strain ATCC 14580 / DSM 13 / JCM 2505 / CCUG 7422 / NBRC 12200 / NCIMB 9375 / NCTC 10341 / NRRL NRS-1264 / Gibson 46).